The chain runs to 299 residues: tRNA pseudouridine synthase B (299 aa).

The active-site Nucleophile is the aspartate 49. The PUA domain maps to 241–299 (MPRVTVSGRAAARVLHGVAPAVRVEHPDGTTVAVVAANGALLALAEADGGGLRLRKVFG).

This sequence belongs to the pseudouridine synthase TruB family. Type 1 subfamily.

The enzyme catalyses uridine(55) in tRNA = pseudouridine(55) in tRNA. Functionally, responsible for synthesis of pseudouridine from uracil-55 in the psi GC loop of transfer RNAs. The chain is tRNA pseudouridine synthase B from Symbiobacterium thermophilum (strain DSM 24528 / JCM 14929 / IAM 14863 / T).